The primary structure comprises 274 residues: Siroheme biosynthesis protein MET8 (274 aa).

Residues 23–24 (EV), 43–45 (SPD), and Phe-93 contribute to the NAD(+) site. The active-site Proton acceptor is the Asp-141.

Belongs to the precorrin-2 dehydrogenase / sirohydrochlorin ferrochelatase family. MET8 subfamily. As to quaternary structure, homodimer.

It catalyses the reaction precorrin-2 + NAD(+) = sirohydrochlorin + NADH + 2 H(+). It carries out the reaction siroheme + 2 H(+) = sirohydrochlorin + Fe(2+). The protein operates within porphyrin-containing compound metabolism; siroheme biosynthesis; siroheme from sirohydrochlorin: step 1/1. It participates in porphyrin-containing compound metabolism; siroheme biosynthesis; sirohydrochlorin from precorrin-2: step 1/1. In terms of biological role, catalyzes the conversion of precorrin-2 into siroheme. This reaction consist of the NAD-dependent oxidation of precorrin-2 into sirohydrochlorin and its subsequent ferrochelation into siroheme. The polypeptide is Siroheme biosynthesis protein MET8 (Saccharomyces cerevisiae (strain ATCC 204508 / S288c) (Baker's yeast)).